The primary structure comprises 226 residues: V-type proton ATPase subunit E 1 (226 aa).

Position 2 is an N-acetylalanine (Ala2). Tyr56 carries the post-translational modification Phosphotyrosine.

This sequence belongs to the V-ATPase E subunit family. In terms of assembly, V-ATPase is a heteromultimeric enzyme made up of two complexes: the ATP-hydrolytic V1 complex and the proton translocation V0 complex. The V1 complex consists of three catalytic AB heterodimers that form a heterohexamer, three peripheral stalks each consisting of EG heterodimers, one central rotor including subunits D and F, and the regulatory subunits C and H. The proton translocation complex V0 consists of the proton transport subunit a, a ring of proteolipid subunits c9c'', rotary subunit d, subunits e and f, and the accessory subunits ATP6AP1/Ac45 and ATP6AP2/PRR. Interacts with RABL2/RABL2A; binds preferentially to GTP-bound RABL2. Interacts with ALDOC. Interacts with RAB11B. Expressed in brain (at protein level).

It localises to the apical cell membrane. The protein localises to the cytoplasmic vesicle. Its subcellular location is the secretory vesicle. It is found in the synaptic vesicle membrane. The protein resides in the clathrin-coated vesicle membrane. In terms of biological role, subunit of the V1 complex of vacuolar(H+)-ATPase (V-ATPase), a multisubunit enzyme composed of a peripheral complex (V1) that hydrolyzes ATP and a membrane integral complex (V0) that translocates protons. V-ATPase is responsible for acidifying and maintaining the pH of intracellular compartments and in some cell types, is targeted to the plasma membrane, where it is responsible for acidifying the extracellular environment. This Rattus norvegicus (Rat) protein is V-type proton ATPase subunit E 1 (Atp6v1e1).